The following is a 239-amino-acid chain: Uridylate kinase (239 aa).

10–13 (KISG) is an ATP binding site. Residues 18 to 23 (GEAGFG) are involved in allosteric activation by GTP. Residue Gly-52 participates in UMP binding. Positions 53 and 57 each coordinate ATP. UMP is bound by residues Asp-72 and 133–140 (TGNPYFST). Residues Asn-161, Tyr-167, and Asp-170 each coordinate ATP.

The protein belongs to the UMP kinase family. As to quaternary structure, homohexamer.

It is found in the cytoplasm. The catalysed reaction is UMP + ATP = UDP + ADP. It functions in the pathway pyrimidine metabolism; CTP biosynthesis via de novo pathway; UDP from UMP (UMPK route): step 1/1. Allosterically activated by GTP. Inhibited by UTP. In terms of biological role, catalyzes the reversible phosphorylation of UMP to UDP. This Lacticaseibacillus paracasei (strain ATCC 334 / BCRC 17002 / CCUG 31169 / CIP 107868 / KCTC 3260 / NRRL B-441) (Lactobacillus paracasei) protein is Uridylate kinase.